Reading from the N-terminus, the 141-residue chain is Ribosome-binding factor A (141 aa).

The interval 120-141 (SPHVQRDLQENDDQEDDSEGSL) is disordered. Residues 129–141 (ENDDQEDDSEGSL) show a composition bias toward acidic residues.

Belongs to the RbfA family. Monomer. Binds 30S ribosomal subunits, but not 50S ribosomal subunits or 70S ribosomes.

The protein resides in the cytoplasm. Its function is as follows. One of several proteins that assist in the late maturation steps of the functional core of the 30S ribosomal subunit. Associates with free 30S ribosomal subunits (but not with 30S subunits that are part of 70S ribosomes or polysomes). Required for efficient processing of 16S rRNA. May interact with the 5'-terminal helix region of 16S rRNA. The sequence is that of Ribosome-binding factor A from Zymomonas mobilis subsp. mobilis (strain ATCC 31821 / ZM4 / CP4).